Consider the following 455-residue polypeptide: tRNA modification GTPase MnmE (455 aa).

(6S)-5-formyl-5,6,7,8-tetrahydrofolate is bound by residues R24, E81, and K120. Residues 216-378 (GMTVVIAGRP…LREHLKACMG (163 aa)) enclose the TrmE-type G domain. N226 is a binding site for K(+). GTP-binding positions include 226 to 231 (NAGKSS), 245 to 251 (TDIAGTT), 270 to 273 (DTAG), 335 to 338 (NKAD), and 359 to 361 (SAR). S230 lines the Mg(2+) pocket. 3 residues coordinate K(+): T245, I247, and T250. Mg(2+) is bound at residue T251. Residue K455 participates in (6S)-5-formyl-5,6,7,8-tetrahydrofolate binding.

The protein belongs to the TRAFAC class TrmE-Era-EngA-EngB-Septin-like GTPase superfamily. TrmE GTPase family. In terms of assembly, homodimer. Heterotetramer of two MnmE and two MnmG subunits. Requires K(+) as cofactor.

The protein localises to the cytoplasm. In terms of biological role, exhibits a very high intrinsic GTPase hydrolysis rate. Involved in the addition of a carboxymethylaminomethyl (cmnm) group at the wobble position (U34) of certain tRNAs, forming tRNA-cmnm(5)s(2)U34. The sequence is that of tRNA modification GTPase MnmE from Pseudomonas aeruginosa (strain ATCC 15692 / DSM 22644 / CIP 104116 / JCM 14847 / LMG 12228 / 1C / PRS 101 / PAO1).